Consider the following 101-residue polypeptide: Small ribosomal subunit protein bS18c (101 aa).

Belongs to the bacterial ribosomal protein bS18 family. As to quaternary structure, part of the 30S ribosomal subunit.

The protein localises to the plastid. Its subcellular location is the chloroplast. The sequence is that of Small ribosomal subunit protein bS18c from Nymphaea alba (White water-lily).